The primary structure comprises 118 residues: uncharacterized protein (118 aa).

This is an uncharacterized protein from Escherichia coli O157:H7.